A 1254-amino-acid polypeptide reads, in one-letter code: Ubiquitin carboxyl-terminal hydrolase 12 (1254 aa).

Serine 84 is subject to Phosphoserine. A DUSP domain is found at 97–199; it reads NVLEQQRDVV…GSYPVVTNLV (103 aa). Positions 364 to 1110 constitute a USP domain; it reads TGLVNLGNTC…SAYLLFYIRR (747 aa). Cysteine 373 functions as the Nucleophile in the catalytic mechanism. Residues 827–893 are disordered; that stretch reads DEGDTEGSEA…EPELTDKPEA (67 aa). Positions 854–864 are enriched in low complexity; sequence TVTNNENVNNT. The span at 867 to 883 shows a compositional bias: acidic residues; it reads RDEDMELTDDVEEDAST. Histidine 1068 functions as the Proton acceptor in the catalytic mechanism. Serine 1160 bears the Phosphoserine mark. Residues 1188–1207 form a disordered region; the sequence is QDCNDEDDNDDGERTNSGRR. Over residues 1189–1198 the composition is skewed to acidic residues; that stretch reads DCNDEDDNDD.

This sequence belongs to the peptidase C19 family. As to quaternary structure, interacts with FZO1.

The catalysed reaction is Thiol-dependent hydrolysis of ester, thioester, amide, peptide and isopeptide bonds formed by the C-terminal Gly of ubiquitin (a 76-residue protein attached to proteins as an intracellular targeting signal).. Its function is as follows. Ubiquitin carboxyl-terminal hydrolase that recognizes ubiquitin chains that stabilize FZO1 and promote mitochondrial fusion. UBP12 deubiquitylates FZO1 only after oligomerization. This Saccharomyces cerevisiae (strain ATCC 204508 / S288c) (Baker's yeast) protein is Ubiquitin carboxyl-terminal hydrolase 12 (UBP12).